Consider the following 53-residue polypeptide: Ovomucoid (53 aa).

A Kazal-like domain is found at 3 to 53 (VDCSEYPQPTCTTEHRPVCGSNNETYGNKCNFCNAVVKSNGTLTVSHFGKC). Intrachain disulfides connect Cys-5/Cys-35, Cys-13/Cys-32, and Cys-21/Cys-53. Asn-42 carries N-linked (GlcNAc...) asparagine glycosylation.

It localises to the secreted. This chain is Ovomucoid, found in Polyplectron bicalcaratum (Grey peacock-pheasant).